A 153-amino-acid polypeptide reads, in one-letter code: Small ribosomal subunit protein eS19 (153 aa).

This sequence belongs to the eukaryotic ribosomal protein eS19 family. In terms of assembly, part of the 30S ribosomal subunit.

Functionally, may be involved in maturation of the 30S ribosomal subunit. This Aeropyrum pernix (strain ATCC 700893 / DSM 11879 / JCM 9820 / NBRC 100138 / K1) protein is Small ribosomal subunit protein eS19.